The chain runs to 295 residues: Protease HtpX (295 aa).

Transmembrane regions (helical) follow at residues I4–L24 and Q42–S62. H147 lines the Zn(2+) pocket. Residue E148 is part of the active site. H151 is a binding site for Zn(2+). 2 helical membrane passes run V158–I178 and V199–F219. Position 224 (E224) interacts with Zn(2+).

The protein belongs to the peptidase M48B family. The cofactor is Zn(2+).

Its subcellular location is the cell inner membrane. The protein is Protease HtpX of Pseudomonas fluorescens (strain ATCC BAA-477 / NRRL B-23932 / Pf-5).